The primary structure comprises 261 residues: MTLGKNKRISKGGKRGKKKTQETMSRKEWYDVVAPKNFEVRQFGKTICNKTQGTKIAADYLRGRVYESNLADLNKTQGDDDAYRKVKFVVQEVQGRNLLTQFHSMEMTSDRVYFLLRKWCTTIEAAVETKTADGYTLRLFVIAFTKKQSNQLSKNCYAKTRLVKWVRHRITNLIRQRLSKVNINEAVTLLTRNILRDRLAKRCNPIVPLRDLRIRKVKVVRTPRFDAQALLNAHGEIPASAEGEARVVEEAQEAPAAEATA.

Basic residues predominate over residues 1–18 (MTLGKNKRISKGGKRGKK). Residues 1-23 (MTLGKNKRISKGGKRGKKKTQET) form a disordered region.

Belongs to the eukaryotic ribosomal protein eS1 family. As to quaternary structure, component of the small ribosomal subunit. Mature ribosomes consist of a small (40S) and a large (60S) subunit. The 40S subunit contains about 33 different proteins and 1 molecule of RNA (18S). The 60S subunit contains about 49 different proteins and 3 molecules of RNA (25S, 5.8S and 5S).

The protein localises to the cytoplasm. This Trypanosoma cruzi (strain CL Brener) protein is Small ribosomal subunit protein eS1A.